Reading from the N-terminus, the 528-residue chain is MKTVHSASYEILRRHGLTTVFGNPGSNELPFLKDFPEDFRYILGLHEGAVVGMADGFALASGRPAFVNLHAAAGTGNGMGALTNAWYSHSPLVITAGQQVRSMIGVEAMLANVDAGQLPKPLVKWSHEPACAQDVPRALSQAIQTASLPPRAPVYLSIPYDDWAQPAPAGVEHLAARQVSGAALPAPALLAELGERLSRSRNPVLVLGPDVDGANANGLAVELAEKLRMPAWVAPSASRCPFPTRHACFRGVLPAAIAGISRLLDGHDLILVVGAPVFRYHQFAPGDYLPAGAELVQVTCDPGEAARAPMGDALVGDIALTLEALLEQVRPSARPLPEALPRPPALAEEGGPLRPETVFDVIDALAPRDAIFVKESTSTVTAFWQRVEMREPGSYFFPAAGGLGFGLPAAVGAQLAQPRRQVIGIIGDGSANYGITALWSAAQYRVPAVFIILKNGTYGALRWFAGVLEVPDAPGLDVPGLDFCAIARGYGVEALHAATREELEGALKHALAADRPVLIEVPTQTIEP.

Mg(2+) contacts are provided by Q117 and L118. Residues 377–460 form a thiamine pyrophosphate binding region; the sequence is TSTVTAFWQR…IILKNGTYGA (84 aa). Positions 428, 455, and 457 each coordinate Ca(2+).

It belongs to the TPP enzyme family. As to quaternary structure, homotetramer. Requires Ca(2+) as cofactor. It depends on thiamine diphosphate as a cofactor. Mg(2+) serves as cofactor.

It catalyses the reaction phenylglyoxylate + H(+) = benzaldehyde + CO2. It functions in the pathway aromatic compound metabolism; (R)-mandelate degradation; benzoate from (R)-mandelate: step 3/4. The protein is Benzoylformate decarboxylase (mdlC) of Pseudomonas aeruginosa (strain ATCC 15692 / DSM 22644 / CIP 104116 / JCM 14847 / LMG 12228 / 1C / PRS 101 / PAO1).